A 717-amino-acid chain; its full sequence is Photosystem I P700 chlorophyll a apoprotein A1 (717 aa).

8 consecutive transmembrane segments (helical) span residues 59–82, 145–168, 184–208, 280–298, 335–358, 374–400, 422–444, and 520–538; these read VFRA…FHGA, LYCT…FHYH, LNHH…HVSL, TAHH…GHMY, WHAQ…HHMY, LSLF…IFMV, AIVS…LYIH, and FLVH…LILL. The [4Fe-4S] cluster site is built by C562 and C571. The next 2 membrane-spanning stretches (helical) occupy residues 578 to 599 and 653 to 675; these read HVFL…HFSW and LSAY…MFLF. Position 664 (H664) interacts with chlorophyll a'. Chlorophyll a is bound by residues M672 and Y680. Residue W681 participates in phylloquinone binding. The chain crosses the membrane as a helical span at residues 713–717; sequence AVGVA.

Belongs to the PsaA/PsaB family. The PsaA/B heterodimer binds the P700 chlorophyll special pair and subsequent electron acceptors. PSI consists of a core antenna complex that captures photons, and an electron transfer chain that converts photonic excitation into a charge separation. The eukaryotic PSI reaction center is composed of at least 11 subunits. P700 is a chlorophyll a/chlorophyll a' dimer, A0 is one or more chlorophyll a, A1 is one or both phylloquinones and FX is a shared 4Fe-4S iron-sulfur center. is required as a cofactor.

It localises to the plastid. It is found in the chloroplast thylakoid membrane. The enzyme catalyses reduced [plastocyanin] + hnu + oxidized [2Fe-2S]-[ferredoxin] = oxidized [plastocyanin] + reduced [2Fe-2S]-[ferredoxin]. PsaA and PsaB bind P700, the primary electron donor of photosystem I (PSI), as well as the electron acceptors A0, A1 and FX. PSI is a plastocyanin-ferredoxin oxidoreductase, converting photonic excitation into a charge separation, which transfers an electron from the donor P700 chlorophyll pair to the spectroscopically characterized acceptors A0, A1, FX, FA and FB in turn. Oxidized P700 is reduced on the lumenal side of the thylakoid membrane by plastocyanin. In Cycas revoluta (Sago palm), this protein is Photosystem I P700 chlorophyll a apoprotein A1.